The primary structure comprises 79 residues: Cytochrome b-c1 complex subunit 10 (79 aa).

The Mitochondrial matrix portion of the chain corresponds to 1-23 (MISFFPNKPMYHVQPHISFITPE). Residues 24–47 (RTMKTIPAFSRWAFAAVAGVFVFA) form a helical membrane-spanning segment. At 48-79 (MQVPKVKTTILQPIAFIGDHFKDKTPEEDKWL) the chain is on the mitochondrial intermembrane side.

It belongs to the UQCR11/QCR10 family. As to quaternary structure, component of the ubiquinol-cytochrome c oxidoreductase (cytochrome b-c1 complex, complex III, CIII), a multisubunit enzyme composed of 3 respiratory subunits cytochrome b, cytochrome c1 and Rieske protein, 2 core protein subunits, and additional low-molecular weight protein subunits. The complex exists as an obligatory dimer and forms supercomplexes (SCs) in the inner mitochondrial membrane with cytochrome c oxidase (complex IV, CIV).

The protein resides in the mitochondrion inner membrane. Component of the ubiquinol-cytochrome c oxidoreductase, a multisubunit transmembrane complex that is part of the mitochondrial electron transport chain which drives oxidative phosphorylation. The respiratory chain contains 3 multisubunit complexes succinate dehydrogenase (complex II, CII), ubiquinol-cytochrome c oxidoreductase (cytochrome b-c1 complex, complex III, CIII) and cytochrome c oxidase (complex IV, CIV), that cooperate to transfer electrons derived from NADH and succinate to molecular oxygen, creating an electrochemical gradient over the inner membrane that drives transmembrane transport and the ATP synthase. The cytochrome b-c1 complex catalyzes electron transfer from ubiquinol to cytochrome c, linking this redox reaction to translocation of protons across the mitochondrial inner membrane, with protons being carried across the membrane as hydrogens on the quinol. In the process called Q cycle, 2 protons are consumed from the matrix, 4 protons are released into the intermembrane space and 2 electrons are passed to cytochrome c. QCR10 has a role in CIII assembly and RIP1 stability. This is Cytochrome b-c1 complex subunit 10 from Schizosaccharomyces pombe (strain 972 / ATCC 24843) (Fission yeast).